The following is a 267-amino-acid chain: Phosphate import ATP-binding protein PstB 1 (267 aa).

In terms of domain architecture, ABC transporter spans 21–262 (LETKDLHVYY…AALQSTSDYV (242 aa)). Residue 53-60 (GPSGCGKS) participates in ATP binding.

This sequence belongs to the ABC transporter superfamily. Phosphate importer (TC 3.A.1.7) family. The complex is composed of two ATP-binding proteins (PstB), two transmembrane proteins (PstC and PstA) and a solute-binding protein (PstS).

It localises to the cell membrane. It catalyses the reaction phosphate(out) + ATP + H2O = ADP + 2 phosphate(in) + H(+). Functionally, part of the ABC transporter complex PstSACB involved in phosphate import. Responsible for energy coupling to the transport system. This chain is Phosphate import ATP-binding protein PstB 1, found in Streptococcus thermophilus (strain CNRZ 1066).